A 418-amino-acid chain; its full sequence is AA11 family lytic polysaccharide monooxygenase B (418 aa).

Positions 1–21 (MMFSKSGLVAVAMLGASAVEA) are cleaved as a signal peptide. His-22 and His-82 together coordinate Cu(+). 3 cysteine pairs are disulfide-bonded: Cys-50–Cys-165, Cys-87–Cys-113, and Cys-206–Cys-240. N-linked (GlcNAc...) asparagine glycans are attached at residues Asn-120 and Asn-134. The tract at residues 226-345 (DGNPSNLQPA…SSSSSNGALT (120 aa)) is disordered. Residues 254–345 (SPSTPSTSSS…SSSSSNGALT (92 aa)) show a composition bias toward low complexity.

This sequence belongs to the polysaccharide monooxygenase AA11 family. Requires Cu(2+) as cofactor.

The protein resides in the secreted. Its function is as follows. Lytic polysaccharide monooxygenase (LPMO)-like protein that acts as a strict peroxygenase and does not catalyze a monooxygenase reaction. It is indeed hardly active on chitin, while being very active on soluble oligomers of N-acetylglucosamine. Cleaves the glycosidic bonds byoxidizing the C1 position. Also unable to oxidize cellopentaose. Probably breaks glycosidic bonds in non-polymeric substrates possibly carbohydrates in the cell wall of the fungus or its competitors. In the presence of chitotetraose, the enzyme can withstand considerable amounts of H(2)O(2), which it uses to efficiently and stoichiometrically convert this substrate. This chain is AA11 family lytic polysaccharide monooxygenase B, found in Aspergillus fumigatus (strain ATCC MYA-4609 / CBS 101355 / FGSC A1100 / Af293) (Neosartorya fumigata).